The following is an 86-amino-acid chain: Small ribosomal subunit protein bS20 (86 aa).

The interval 1-27 is disordered; that stretch reads MANNKSAKKRAIQAEKRRQHNASRRSM.

This sequence belongs to the bacterial ribosomal protein bS20 family.

Functionally, binds directly to 16S ribosomal RNA. This is Small ribosomal subunit protein bS20 from Vibrio vulnificus (strain CMCP6).